The sequence spans 263 residues: Serine protease ami (263 aa).

The signal sequence occupies residues 1-21 (MNISRVLFAVVLVLTVSTYEC). Asparagine 2 is a glycosylation site (N-linked (GlcNAc...) asparagine). Positions 22–26 (RPRGR) are cleaved as a propeptide — activation peptide. One can recognise a Peptidase S1 domain in the interval 27-254 (ILGGQDSKEK…YKSWIMETMY (228 aa)). A disulfide bond links cysteine 52 and cysteine 68. Histidine 67 functions as the Charge relay system in the catalytic mechanism. N-linked (GlcNAc...) asparagine glycans are attached at residues asparagine 73, asparagine 74, and asparagine 108. Aspartate 115 functions as the Charge relay system in the catalytic mechanism. Disulfide bonds link cysteine 149/cysteine 215, cysteine 180/cysteine 196, and cysteine 205/cysteine 230. Serine 209 serves as the catalytic Charge relay system. Asparagine 255 carries an N-linked (GlcNAc...) asparagine glycan.

It belongs to the peptidase S1 family. As to expression, in the embryo, localizes to paraxial regions at the neurula stage and anterior ventral regions at the tailbud stage. From the late tailbud to tadpole stage, expressed along the forming blood vessels including the anterior cardinal veins, posterior cardinal veins, intersomitic veins, dorsal longitudinal anastomosing vessel, dorsal aorta, pronephric sinus and most prominently around the vascular vitelline network, where expression shows left-right asymmetry in the stage 42 embryo. Localizes to endothelial cells. In adults, shows highest expression in liver with moderate levels of expression in the fat body, lung, gut and vessels. Weakly expressed in adult heart, muscle, testis and ovary.

It localises to the secreted. In terms of biological role, probable serine protease. The chain is Serine protease ami from Xenopus laevis (African clawed frog).